A 240-amino-acid polypeptide reads, in one-letter code: 4-hydroxy-tetrahydrodipicolinate reductase (240 aa).

Residues 79 to 81 (ATT) and 103 to 106 (SANM) contribute to the NAD(+) site. His-135 serves as the catalytic Proton donor/acceptor. A (S)-2,3,4,5-tetrahydrodipicolinate-binding site is contributed by His-136. The Proton donor role is filled by Lys-139. 145 to 146 (GT) contacts (S)-2,3,4,5-tetrahydrodipicolinate.

It belongs to the DapB family.

It is found in the cytoplasm. It carries out the reaction (S)-2,3,4,5-tetrahydrodipicolinate + NAD(+) + H2O = (2S,4S)-4-hydroxy-2,3,4,5-tetrahydrodipicolinate + NADH + H(+). The enzyme catalyses (S)-2,3,4,5-tetrahydrodipicolinate + NADP(+) + H2O = (2S,4S)-4-hydroxy-2,3,4,5-tetrahydrodipicolinate + NADPH + H(+). The protein operates within amino-acid biosynthesis; L-lysine biosynthesis via DAP pathway; (S)-tetrahydrodipicolinate from L-aspartate: step 4/4. Functionally, catalyzes the conversion of 4-hydroxy-tetrahydrodipicolinate (HTPA) to tetrahydrodipicolinate. This chain is 4-hydroxy-tetrahydrodipicolinate reductase, found in Staphylococcus aureus (strain USA300).